The following is a 428-amino-acid chain: Tyrosine--tRNA ligase (428 aa).

Residue Tyr-41 coordinates L-tyrosine. The 'HIGH' region signature appears at 46–55 (PTADSLHLGH). Positions 179 and 183 each coordinate L-tyrosine. The short motif at 239–243 (KFGKT) is the 'KMSKS' region element. Lys-242 contributes to the ATP binding site. One can recognise an S4 RNA-binding domain in the interval 361–418 (ADLMQALVDSELQPSRGQARKTIASNAITINGEKQSDPEYTFSDSDRLFGRYTLLRRG).

This sequence belongs to the class-I aminoacyl-tRNA synthetase family. TyrS type 1 subfamily. Homodimer.

The protein localises to the cytoplasm. The enzyme catalyses tRNA(Tyr) + L-tyrosine + ATP = L-tyrosyl-tRNA(Tyr) + AMP + diphosphate + H(+). Catalyzes the attachment of tyrosine to tRNA(Tyr) in a two-step reaction: tyrosine is first activated by ATP to form Tyr-AMP and then transferred to the acceptor end of tRNA(Tyr). In Cronobacter sakazakii (strain ATCC BAA-894) (Enterobacter sakazakii), this protein is Tyrosine--tRNA ligase.